Here is a 413-residue protein sequence, read N- to C-terminus: Histidine--tRNA ligase (413 aa).

It belongs to the class-II aminoacyl-tRNA synthetase family. In terms of assembly, homodimer.

It localises to the cytoplasm. The catalysed reaction is tRNA(His) + L-histidine + ATP = L-histidyl-tRNA(His) + AMP + diphosphate + H(+). This is Histidine--tRNA ligase from Fusobacterium nucleatum subsp. nucleatum (strain ATCC 25586 / DSM 15643 / BCRC 10681 / CIP 101130 / JCM 8532 / KCTC 2640 / LMG 13131 / VPI 4355).